We begin with the raw amino-acid sequence, 403 residues long: Argininosuccinate synthase (403 aa).

ATP-binding positions include 10–18 and Ala-37; that span reads AYSGGLDTS. Tyr-88 and Ser-93 together coordinate L-citrulline. Residue Gly-118 participates in ATP binding. L-aspartate-binding residues include Thr-120, Asn-124, and Asp-125. Asn-124 contacts L-citrulline. L-citrulline contacts are provided by Arg-128, Ser-178, Ser-187, Glu-263, and Tyr-275.

Belongs to the argininosuccinate synthase family. Type 1 subfamily. In terms of assembly, homotetramer.

It localises to the cytoplasm. The enzyme catalyses L-citrulline + L-aspartate + ATP = 2-(N(omega)-L-arginino)succinate + AMP + diphosphate + H(+). The protein operates within amino-acid biosynthesis; L-arginine biosynthesis; L-arginine from L-ornithine and carbamoyl phosphate: step 2/3. This is Argininosuccinate synthase from Marinobacter nauticus (strain ATCC 700491 / DSM 11845 / VT8) (Marinobacter aquaeolei).